The sequence spans 413 residues: Ribulose bisphosphate carboxylase/oxygenase activase, chloroplastic (413 aa).

The transit peptide at 1–54 (MAATVSTIGAVNRTTLNNSNYGGLVPNSAFLGSRLKVSSRFTTSKMVTGNFKIV) directs the protein to the chloroplast. 162 to 169 (GGKGQGKS) is an ATP binding site.

It belongs to the RuBisCO activase family.

Its subcellular location is the plastid. It is found in the chloroplast stroma. In terms of biological role, activation of RuBisCO (ribulose-1,5-bisphosphate carboxylase/oxygenase; EC 4.1.1.39) involves the ATP-dependent carboxylation of the epsilon-amino group of lysine leading to a carbamate structure. The protein is Ribulose bisphosphate carboxylase/oxygenase activase, chloroplastic of Cucumis sativus (Cucumber).